We begin with the raw amino-acid sequence, 56 residues long: Conotoxin reg3.9 (56 aa).

Residues 1-8 (LLFPLSAL) form the signal peptide. The disordered stretch occupies residues 1 to 22 (LLFPLSALPLDGDQPADQPAER). Residues 9-40 (PLDGDQPADQPAERMQDISPEQNFWFDLVERG) constitute a propeptide that is removed on maturation. 3 disulfides stabilise this stretch: Cys-41–Cys-55, Cys-42–Cys-53, and Cys-47–Cys-56.

This sequence belongs to the conotoxin M superfamily. Expressed by the venom duct.

It is found in the secreted. The protein is Conotoxin reg3.9 of Conus regius (Crown cone).